A 183-amino-acid chain; its full sequence is ATP synthase subunit delta (183 aa).

This sequence belongs to the ATPase delta chain family. In terms of assembly, F-type ATPases have 2 components, F(1) - the catalytic core - and F(0) - the membrane proton channel. F(1) has five subunits: alpha(3), beta(3), gamma(1), delta(1), epsilon(1). F(0) has three main subunits: a(1), b(2) and c(10-14). The alpha and beta chains form an alternating ring which encloses part of the gamma chain. F(1) is attached to F(0) by a central stalk formed by the gamma and epsilon chains, while a peripheral stalk is formed by the delta and b chains.

The protein localises to the cell inner membrane. Its function is as follows. F(1)F(0) ATP synthase produces ATP from ADP in the presence of a proton or sodium gradient. F-type ATPases consist of two structural domains, F(1) containing the extramembraneous catalytic core and F(0) containing the membrane proton channel, linked together by a central stalk and a peripheral stalk. During catalysis, ATP synthesis in the catalytic domain of F(1) is coupled via a rotary mechanism of the central stalk subunits to proton translocation. This protein is part of the stalk that links CF(0) to CF(1). It either transmits conformational changes from CF(0) to CF(1) or is implicated in proton conduction. The chain is ATP synthase subunit delta from Desulfosudis oleivorans (strain DSM 6200 / JCM 39069 / Hxd3) (Desulfococcus oleovorans).